We begin with the raw amino-acid sequence, 162 residues long: Regulator of ribonuclease activity A (162 aa).

It belongs to the RraA family. In terms of assembly, homotrimer. Binds to both RNA-binding sites in the C-terminal region of Rne and to RhlB.

It is found in the cytoplasm. Functionally, globally modulates RNA abundance by binding to RNase E (Rne) and regulating its endonucleolytic activity. Can modulate Rne action in a substrate-dependent manner by altering the composition of the degradosome. Modulates RNA-binding and helicase activities of the degradosome. This is Regulator of ribonuclease activity A from Haemophilus influenzae (strain 86-028NP).